A 365-amino-acid polypeptide reads, in one-letter code: Peptide chain release factor 2 (365 aa).

Q251 bears the N5-methylglutamine mark.

This sequence belongs to the prokaryotic/mitochondrial release factor family. Post-translationally, methylated by PrmC. Methylation increases the termination efficiency of RF2.

It is found in the cytoplasm. Functionally, peptide chain release factor 2 directs the termination of translation in response to the peptide chain termination codons UGA and UAA. The sequence is that of Peptide chain release factor 2 from Campylobacter jejuni subsp. jejuni serotype O:6 (strain 81116 / NCTC 11828).